The following is a 314-amino-acid chain: MNIILANPRGFCAGVDRAISIVELALEIHGAPIYVRHEVVHNRFVVDGLKAKGAIFVEELDEVPDGAIVIFSAHGVSQAVRHEAKRRELKVFDATCPLVTKVHMQVARASKKGTKAILIGHEGHPEVVGTMGQYDNEKGGIFLVEDVEDIAKLGLKEDEDLTFMTQTTLSIDDTIDVIEALKQKYPAIQGPRKNDICYATTNRQQAVRELAKLAQLVLVVGSKNSSNSNRLAELASRMGTPSQLIDGPQDIDPNWLQGVTTIGITAGASAPEVLVQSVVEHLKTLGVTKVEELEGCEENTVFEVPRELRITEVN.

Residue C12 coordinates [4Fe-4S] cluster. The (2E)-4-hydroxy-3-methylbut-2-enyl diphosphate site is built by H41 and H74. Residues H41 and H74 each contribute to the dimethylallyl diphosphate site. H41 and H74 together coordinate isopentenyl diphosphate. Residue C96 participates in [4Fe-4S] cluster binding. H124 contributes to the (2E)-4-hydroxy-3-methylbut-2-enyl diphosphate binding site. Position 124 (H124) interacts with dimethylallyl diphosphate. Isopentenyl diphosphate is bound at residue H124. E126 serves as the catalytic Proton donor. A (2E)-4-hydroxy-3-methylbut-2-enyl diphosphate-binding site is contributed by T167. Position 197 (C197) interacts with [4Fe-4S] cluster. Residues S225, S226, N227, and S269 each contribute to the (2E)-4-hydroxy-3-methylbut-2-enyl diphosphate site. Residues S225, S226, N227, and S269 each coordinate dimethylallyl diphosphate. Positions 225, 226, 227, and 269 each coordinate isopentenyl diphosphate.

The protein belongs to the IspH family. Requires [4Fe-4S] cluster as cofactor.

It catalyses the reaction isopentenyl diphosphate + 2 oxidized [2Fe-2S]-[ferredoxin] + H2O = (2E)-4-hydroxy-3-methylbut-2-enyl diphosphate + 2 reduced [2Fe-2S]-[ferredoxin] + 2 H(+). The catalysed reaction is dimethylallyl diphosphate + 2 oxidized [2Fe-2S]-[ferredoxin] + H2O = (2E)-4-hydroxy-3-methylbut-2-enyl diphosphate + 2 reduced [2Fe-2S]-[ferredoxin] + 2 H(+). It participates in isoprenoid biosynthesis; dimethylallyl diphosphate biosynthesis; dimethylallyl diphosphate from (2E)-4-hydroxy-3-methylbutenyl diphosphate: step 1/1. It functions in the pathway isoprenoid biosynthesis; isopentenyl diphosphate biosynthesis via DXP pathway; isopentenyl diphosphate from 1-deoxy-D-xylulose 5-phosphate: step 6/6. In terms of biological role, catalyzes the conversion of 1-hydroxy-2-methyl-2-(E)-butenyl 4-diphosphate (HMBPP) into a mixture of isopentenyl diphosphate (IPP) and dimethylallyl diphosphate (DMAPP). Acts in the terminal step of the DOXP/MEP pathway for isoprenoid precursor biosynthesis. In Glaesserella parasuis serovar 5 (strain SH0165) (Haemophilus parasuis), this protein is 4-hydroxy-3-methylbut-2-enyl diphosphate reductase.